Consider the following 254-residue polypeptide: Phosphate import ATP-binding protein PstB 2 (254 aa).

The ABC transporter domain occupies 9 to 249 (FNIDNLNLFY…PRDDRTRGYV (241 aa)). 41 to 48 (GPSGCGKS) is a binding site for ATP.

The protein belongs to the ABC transporter superfamily. Phosphate importer (TC 3.A.1.7) family. In terms of assembly, the complex is composed of two ATP-binding proteins (PstB), two transmembrane proteins (PstC and PstA) and a solute-binding protein (PstS).

The protein localises to the cell inner membrane. It catalyses the reaction phosphate(out) + ATP + H2O = ADP + 2 phosphate(in) + H(+). Part of the ABC transporter complex PstSACB involved in phosphate import. Responsible for energy coupling to the transport system. The protein is Phosphate import ATP-binding protein PstB 2 of Photobacterium profundum (strain SS9).